We begin with the raw amino-acid sequence, 447 residues long: Thiol-specific monooxygenase (447 aa).

FAD is bound by residues 13–17, glutamate 38, 46–47, 91–92, and 137–138; these read GAGPS, VW, NT, and DV. 90 to 91 contributes to the NADP(+) binding site; that stretch reads TN. 223–226 contributes to the NADP(+) binding site; it reads SAND.

The protein belongs to the FMO family. In terms of assembly, monomer. Requires FAD as cofactor.

Flavin-dependent oxidation of thiol-containing compounds. Probably required for the correct folding of disulfide-bonded proteins. In Schizosaccharomyces pombe (strain 972 / ATCC 24843) (Fission yeast), this protein is Thiol-specific monooxygenase (fmo1).